Here is a 344-residue protein sequence, read N- to C-terminus: Anthranilate phosphoribosyltransferase (344 aa).

5-phospho-alpha-D-ribose 1-diphosphate contacts are provided by residues Gly-79, 82–83 (GD), Thr-87, 89–92 (NIST), 107–115 (KHGNRSVSS), and Ser-119. Gly-79 serves as a coordination point for anthranilate. Residue Ser-91 coordinates Mg(2+). Anthranilate is bound at residue Asn-110. Arg-165 lines the anthranilate pocket. Mg(2+) is bound by residues Asp-224 and Glu-225.

The protein belongs to the anthranilate phosphoribosyltransferase family. As to quaternary structure, homodimer. Mg(2+) is required as a cofactor.

The enzyme catalyses N-(5-phospho-beta-D-ribosyl)anthranilate + diphosphate = 5-phospho-alpha-D-ribose 1-diphosphate + anthranilate. It functions in the pathway amino-acid biosynthesis; L-tryptophan biosynthesis; L-tryptophan from chorismate: step 2/5. Its function is as follows. Catalyzes the transfer of the phosphoribosyl group of 5-phosphorylribose-1-pyrophosphate (PRPP) to anthranilate to yield N-(5'-phosphoribosyl)-anthranilate (PRA). The polypeptide is Anthranilate phosphoribosyltransferase (Salinibacter ruber (strain DSM 13855 / M31)).